Consider the following 438-residue polypeptide: uncharacterized protein (438 aa).

The signal sequence occupies residues 1 to 20 (MNTRLALVLCAVGSGVLSFS). Cys-21 is lipidated: N-palmitoyl cysteine. Cys-21 carries S-diacylglycerol cysteine lipidation.

It is found in the cell membrane. This is an uncharacterized protein from Treponema pallidum (strain Nichols).